A 472-amino-acid chain; its full sequence is Zinc finger and BTB domain-containing protein 18.2 (472 aa).

Residues 24-91 (CDCTVLVGEA…MYEGKLEFSN (68 aa)) enclose the BTB domain. Residues 127-149 (KIIDDGEKDDKPVDSEEHHEHSF) are compositionally biased toward basic and acidic residues. Disordered regions lie at residues 127 to 155 (KIID…SQQK), 197 to 236 (AGKT…FKPM), and 269 to 334 (DLLS…LSTS). Residues 205-215 (SSPSSPLSQRS) are compositionally biased toward low complexity. Positions 279–288 (AKSPKSQQVG) are enriched in polar residues. A compositionally biased stretch (basic and acidic residues) spans 309–319 (HTREDDLYQDR). 4 C2H2-type zinc fingers span residues 344-366 (CICP…LSSH), 384-406 (PTCT…ERTH), 412-434 (FTCG…AVVH), and 440-463 (HACK…RKFH).

The protein belongs to the krueppel C2H2-type zinc-finger protein family. ZBTB18 subfamily.

It localises to the nucleus. In terms of biological role, transcriptional repressor that plays a role in various developmental processes. Specifically binds the consensus DNA sequence 5'-[AC]ACATCTG[GT][AC]-3' which contains the E box core, and acts by recruiting chromatin remodeling multiprotein complexes. The sequence is that of Zinc finger and BTB domain-containing protein 18.2 (zbtb18.2) from Xenopus laevis (African clawed frog).